Consider the following 208-residue polypeptide: GTP cyclohydrolase 1 (208 aa).

The Zn(2+) site is built by Cys-89, His-92, and Cys-163.

Belongs to the GTP cyclohydrolase I family. As to quaternary structure, homomer.

The enzyme catalyses GTP + H2O = 7,8-dihydroneopterin 3'-triphosphate + formate + H(+). The protein operates within cofactor biosynthesis; 7,8-dihydroneopterin triphosphate biosynthesis; 7,8-dihydroneopterin triphosphate from GTP: step 1/1. This Saccharolobus islandicus (strain Y.N.15.51 / Yellowstone #2) (Sulfolobus islandicus) protein is GTP cyclohydrolase 1.